Reading from the N-terminus, the 126-residue chain is Hydrogenase maturation factor HypA (126 aa).

Residue His2 participates in Ni(2+) binding. 4 residues coordinate Zn(2+): Cys78, Cys81, Cys97, and Cys100.

Belongs to the HypA/HybF family.

Involved in the maturation of [NiFe] hydrogenases. Required for nickel insertion into the metal center of the hydrogenase. This Methanococcus maripaludis (strain C6 / ATCC BAA-1332) protein is Hydrogenase maturation factor HypA.